Here is a 337-residue protein sequence, read N- to C-terminus: Aspartate-semialdehyde dehydrogenase 2 (337 aa).

NADP(+) contacts are provided by residues 13-16 (TGAV) and 41-42 (RS). Arg-101 is a phosphate binding site. Cys-132 serves as the catalytic Acyl-thioester intermediate. Gln-159 is a binding site for substrate. 162-163 (SG) lines the NADP(+) pocket. Phosphate is bound at residue Lys-216. Arg-238 contributes to the substrate binding site. The active-site Proton acceptor is the His-245. Residue Asn-316 coordinates NADP(+).

It belongs to the aspartate-semialdehyde dehydrogenase family. As to quaternary structure, homodimer.

It catalyses the reaction L-aspartate 4-semialdehyde + phosphate + NADP(+) = 4-phospho-L-aspartate + NADPH + H(+). It functions in the pathway amino-acid biosynthesis; L-lysine biosynthesis via DAP pathway; (S)-tetrahydrodipicolinate from L-aspartate: step 2/4. Its pathway is amino-acid biosynthesis; L-methionine biosynthesis via de novo pathway; L-homoserine from L-aspartate: step 2/3. The protein operates within amino-acid biosynthesis; L-threonine biosynthesis; L-threonine from L-aspartate: step 2/5. Functionally, catalyzes the NADPH-dependent formation of L-aspartate-semialdehyde (L-ASA) by the reductive dephosphorylation of L-aspartyl-4-phosphate. The protein is Aspartate-semialdehyde dehydrogenase 2 (asd2) of Vibrio cholerae serotype O1 (strain ATCC 39315 / El Tor Inaba N16961).